A 254-amino-acid chain; its full sequence is Vitamin B12 import ATP-binding protein BtuD (254 aa).

An ABC transporter domain is found at 3 to 239 (INYISVGNRL…ENLQQVFETP (237 aa)). ATP is bound at residue 29–36 (GPNGSGKS).

Belongs to the ABC transporter superfamily. Vitamin B12 importer (TC 3.A.1.13.1) family. The complex is composed of two ATP-binding proteins (BtuD), two transmembrane proteins (BtuC) and a solute-binding protein (BtuF).

The protein localises to the cell inner membrane. The enzyme catalyses an R-cob(III)alamin(out) + ATP + H2O = an R-cob(III)alamin(in) + ADP + phosphate + H(+). Functionally, part of the ABC transporter complex BtuCDF involved in vitamin B12 import. Responsible for energy coupling to the transport system. In Vibrio vulnificus (strain CMCP6), this protein is Vitamin B12 import ATP-binding protein BtuD.